The following is a 953-amino-acid chain: Anion exchange protein 4 (953 aa).

Residues 20–41 (SEQLDGDLGPGSGLDGPSDIDN) form a disordered region. The next 4 helical transmembrane spans lie at 385 to 405 (AVLYIYLATVTNAITFGGLLG), 413 to 433 (GVLESFLGTAVAGATFCLMAG), 470 to 490 (VGIWVATFCLALVATEASLLV), and 501 to 521 (FCALISLIFIYDAVGKMLNLI). The tract at residues 385 to 953 (AVLYIYLATV…KAPEINISVN (569 aa)) is membrane (anion exchange). Residues Asn546 and Asn570 are each glycosylated (N-linked (GlcNAc...) asparagine). The next 7 helical transmembrane spans lie at 594–614 (VPDIAFFSLLLFFTSFLCAIA), 635–655 (FSSVLAILLGCGLDAFLGLAT), 682–702 (PWWLSVAAALPALLLSILIFM), 728–748 (LFCVAVLMLFTSALGLPWYVS), 785–805 (GLVVFILTGVSIFLAPVLKFI), 807–827 (MPVLYGIFLYMGVAALSSMQF), and 869–889 (LWVIKSTPAAIVFPLMLLGLV). Over residues 916-927 (KTIPENRPEPEH) the composition is skewed to basic and acidic residues. A disordered region spans residues 916-938 (KTIPENRPEPEHLFSGNDSENSE). N-linked (GlcNAc...) asparagine glycans are attached at residues Asn932 and Asn949.

The protein belongs to the anion exchanger (TC 2.A.31) family. As to expression, expressed in kidney and gastrointestinal tract. In kidney, it is highly expressed in the cortex, expressed at intermediate level in the outer medulla and not expressed in the inner medulla. It is expressed in the cecum, while it is absent in other segments of gastrointestinal tract. Highly expressed in the cortical collecting duct (CCD). Expressed in both alpha-intercalated cells and beta-intercalated cells in the CCD (at protein level).

The protein localises to the basolateral cell membrane. It carries out the reaction 2 hydrogencarbonate(out) + chloride(in) + Na(+)(out) = 2 hydrogencarbonate(in) + chloride(out) + Na(+)(in). The enzyme catalyses K(+)(in) + 2 hydrogencarbonate(in) + chloride(out) = K(+)(out) + 2 hydrogencarbonate(out) + chloride(in). The catalysed reaction is Li(+)(in) + 2 hydrogencarbonate(in) + chloride(out) = Li(+)(out) + 2 hydrogencarbonate(out) + chloride(in). It catalyses the reaction Rb(+)(in) + 2 hydrogencarbonate(in) + chloride(out) = Rb(+)(out) + 2 hydrogencarbonate(out) + chloride(in). It carries out the reaction Cs(+)(in) + 2 hydrogencarbonate(in) + chloride(out) = Cs(+)(out) + 2 hydrogencarbonate(out) + chloride(in). 4,4'-diisothiocyanatodihydrostilbene-2,2'- disulfonic acid (H2DIDS) potently inhibits chloride/hydrogencarbonate antiporter activity with 50% inhibition at about 5 uM. Completely inhibits chloride/hydrogencarbonate antiporter activity at 200 uM of 4,4'-diisothiocyano-trans-stilbene-2,2'-disulfonic acid (DIDS). In terms of biological role, electroneutral Cl(-)/HCO3(-) antiporter that favors chloride ion entry and efflux of hydrogencarbonate and sodium ion across the basolateral membrane and may participate in salivary secretion. Also mediates Cl(-)/HCO3(-) exchange activity in the presence of K(+) as well as Cs(+), Li(+), and Rb(+). Does not contribute to Cl(-)/HCO3(-) exchanger in the apical membrane of the upper villous epithelium. The protein is Anion exchange protein 4 of Rattus norvegicus (Rat).